A 688-amino-acid chain; its full sequence is Glycine--tRNA ligase beta subunit (688 aa).

The protein belongs to the class-II aminoacyl-tRNA synthetase family. In terms of assembly, tetramer of two alpha and two beta subunits.

It localises to the cytoplasm. The catalysed reaction is tRNA(Gly) + glycine + ATP = glycyl-tRNA(Gly) + AMP + diphosphate. The chain is Glycine--tRNA ligase beta subunit (glyS) from Haemophilus influenzae (strain ATCC 51907 / DSM 11121 / KW20 / Rd).